Reading from the N-terminus, the 224-residue chain is MKEKDYWEEAWLTSCTSIHDHHCDCGSWRDHLWTLCALDDADLAAAADIIEREEADGGEDFGFVDGDPGDAGGSAACTSLPPESKIPALLTRPILSEWSEQLHTPNTPGKAESRPKLEIKVSPLPLSVPSVQLHQIPTRSRRSSKPRKPRKKRKERVRPVSRVPKALLREMDRLMTKQRDALPESESSSYFSSDSLTDPWTTSDDDFQSDPDPLTNKRKKRLQF.

The segment at 128 to 224 is disordered; sequence VPSVQLHQIP…TNKRKKRLQF (97 aa). Polar residues predominate over residues 129-138; sequence PSVQLHQIPT. Residues 139 to 156 show a composition bias toward basic residues; that stretch reads RSRRSSKPRKPRKKRKER. Positions 167 to 182 are enriched in basic and acidic residues; the sequence is LLREMDRLMTKQRDAL. The span at 185–195 shows a compositional bias: low complexity; sequence SESSSYFSSDS.

This is an uncharacterized protein from Torque teno sus virus 1 (isolate Sd-TTV31).